We begin with the raw amino-acid sequence, 340 residues long: Solute carrier family 35 member G3 (340 aa).

The interval Pro11–Cys33 is disordered. A run of 9 helical transmembrane segments spans residues Thr39–Phe59, Leu69–Leu89, Phe107–Val127, Ala160–Gly180, Leu189–Leu209, Thr223–Leu243, Cys257–Thr277, Leu283–Leu303, and Val307–Ala327. Positions Leu51–Gly176 constitute an EamA 1 domain. One can recognise an EamA 2 domain in the interval Tyr274 to Ala327.

This sequence belongs to the SLC35G solute transporter family.

The protein resides in the membrane. The chain is Solute carrier family 35 member G3 (Slc35g3) from Mus musculus (Mouse).